The primary structure comprises 394 residues: Succinate--CoA ligase [ADP-forming] subunit beta (394 aa).

The ATP-grasp domain occupies 9–243 (KDILAGFGIA…YSQLNPLEIA (235 aa)). Residues Lys45, 52-54 (GRG), Glu98, Val101, and Glu106 each bind ATP. Residues Asn198 and Asp212 each coordinate Mg(2+). Substrate-binding positions include Asn263 and 320 to 322 (GIM).

It belongs to the succinate/malate CoA ligase beta subunit family. Heterotetramer of two alpha and two beta subunits. The cofactor is Mg(2+).

The enzyme catalyses succinate + ATP + CoA = succinyl-CoA + ADP + phosphate. The catalysed reaction is GTP + succinate + CoA = succinyl-CoA + GDP + phosphate. It functions in the pathway carbohydrate metabolism; tricarboxylic acid cycle; succinate from succinyl-CoA (ligase route): step 1/1. Functionally, succinyl-CoA synthetase functions in the citric acid cycle (TCA), coupling the hydrolysis of succinyl-CoA to the synthesis of either ATP or GTP and thus represents the only step of substrate-level phosphorylation in the TCA. The beta subunit provides nucleotide specificity of the enzyme and binds the substrate succinate, while the binding sites for coenzyme A and phosphate are found in the alpha subunit. The sequence is that of Succinate--CoA ligase [ADP-forming] subunit beta from Pelobacter propionicus (strain DSM 2379 / NBRC 103807 / OttBd1).